The primary structure comprises 466 residues: Ribulose bisphosphate carboxylase large chain (466 aa).

K5 is modified (N6,N6,N6-trimethyllysine). Substrate contacts are provided by N114 and T164. The Proton acceptor role is filled by K166. K168 lines the substrate pocket. 3 residues coordinate Mg(2+): K192, D194, and E195. Residue K192 is modified to N6-carboxylysine. The active-site Proton acceptor is H285. R286, H318, and S370 together coordinate substrate.

It belongs to the RuBisCO large chain family. Type I subfamily. Heterohexadecamer of 8 large chains and 8 small chains; disulfide-linked. The disulfide link is formed within the large subunit homodimers. The cofactor is Mg(2+). In terms of processing, the disulfide bond which can form in the large chain dimeric partners within the hexadecamer appears to be associated with oxidative stress and protein turnover.

It localises to the plastid. Its subcellular location is the chloroplast. It carries out the reaction 2 (2R)-3-phosphoglycerate + 2 H(+) = D-ribulose 1,5-bisphosphate + CO2 + H2O. The catalysed reaction is D-ribulose 1,5-bisphosphate + O2 = 2-phosphoglycolate + (2R)-3-phosphoglycerate + 2 H(+). Functionally, ruBisCO catalyzes two reactions: the carboxylation of D-ribulose 1,5-bisphosphate, the primary event in carbon dioxide fixation, as well as the oxidative fragmentation of the pentose substrate in the photorespiration process. Both reactions occur simultaneously and in competition at the same active site. This is Ribulose bisphosphate carboxylase large chain from Averrhoa carambola (Star fruit).